The primary structure comprises 199 residues: Ribosome maturation factor RimP (199 aa).

The tract at residues 165 to 199 is disordered; the sequence is AGNLPPQPEDDEDMLADFEIDESEDEEDPETGDVQ. Residues 172–199 show a composition bias toward acidic residues; that stretch reads PEDDEDMLADFEIDESEDEEDPETGDVQ.

It belongs to the RimP family.

It is found in the cytoplasm. Required for maturation of 30S ribosomal subunits. In Hyphomonas neptunium (strain ATCC 15444), this protein is Ribosome maturation factor RimP.